The sequence spans 316 residues: Alkaline ceramidase YPC1 (316 aa).

Residues Met1–Tyr36 lie on the Lumenal side of the membrane. Cys27 and Cys219 form a disulfide bridge. Residues Ile37 to Thr57 lie within the membrane without spanning it. Topologically, residues Tyr58 to Arg68 are lumenal. An intramembrane segment occupies Phe69 to Thr89. Topologically, residues Leu90 to Arg93 are lumenal. A helical transmembrane segment spans residues Phe94–Val114. Topologically, residues Cys115 to Gln135 are cytoplasmic. A helical membrane pass occupies residues Ile136 to Tyr156. Residues Lys157 to Asp160 are Lumenal-facing. An intramembrane segment occupies Ile161 to Thr181. Residues Tyr182–Lys195 are Lumenal-facing. Residues Ala196–Ile216 lie within the membrane without spanning it. At His217–Ser228 the chain is on the lumenal side. Residues Ile229–Gly249 form a helical membrane-spanning segment. Topologically, residues Met250–Lys316 are cytoplasmic.

This sequence belongs to the alkaline ceramidase family.

Its subcellular location is the endoplasmic reticulum membrane. The catalysed reaction is N-hexanoyl-sphinganine + H2O = hexanoate + sphinganine. The enzyme catalyses sphinganine + hexadecanoate = N-hexadecanoylsphinganine + H2O. It catalyses the reaction N-hexadecanoyl-(4R)-hydroxysphinganine + H2O = (4R)-hydroxysphinganine + hexadecanoate. It carries out the reaction N-hexadecanoylsphing-4-enine + H2O = sphing-4-enine + hexadecanoate. The catalysed reaction is an N-acyl-(4R)-4-hydroxysphinganine + H2O = (4R)-hydroxysphinganine + a fatty acid. Functionally, alkaline ceramidase that hydrolyzes phytoceramide and also dihydroceramide into phytosphingosine or dihydrosphingosine. Prefers phytoceramide. Also has reverse activity as acyl-CoA-independent ceramide synthase, catalyzing synthesis of phytoceramide and dihydroceramide from palmitic acid and phytosphingosine or dihydrosphingosine. Is not responsible for the breakdown of unsaturated ceramide. Preferentially uses very long chain fatty acids (C-24 and C-26) in vivo compared to C-16 in vitro. The chain is Alkaline ceramidase YPC1 (YPC1) from Saccharomyces cerevisiae (strain ATCC 204508 / S288c) (Baker's yeast).